A 97-amino-acid polypeptide reads, in one-letter code: Protein RALF-like 2 (97 aa).

The N-terminal stretch at Met-1–Ala-25 is a signal peptide. Disulfide bonds link Cys-42–Cys-49 and Cys-61–Cys-67.

This sequence belongs to the plant rapid alkalinization factor (RALF) family.

Its subcellular location is the secreted. Cell signaling peptide that may regulate plant stress, growth, and development. Mediates a rapid alkalinization of extracellular space by mediating a transient increase in the cytoplasmic Ca(2+) concentration leading to a calcium-dependent signaling events through a cell surface receptor and a concomitant activation of some intracellular mitogen-activated protein kinases. The sequence is that of Protein RALF-like 2 (RALFL2) from Arabidopsis thaliana (Mouse-ear cress).